The sequence spans 308 residues: MQANIFPFYPQPRTPFKFDTKIIEIIIICIVTACTFIIILPGIRGKSRSIWLLRILTSLFIGAVILAVNFTSDWEMGTITATTVYKSFSHSMLNASIGLWIGLKGLNITLIGNPEYQLNETINYNEEFAWESANQFETSYKDALERGLPFPIVYVAEKFTISSDCGLFQQYCISTYYSSGIMWIAFCSWILYNVLFSMPVILYGIYMMFVTAICMLVSLISFASVRKAPVCNIQFGNSILKTHFGVSYWLSLITGLLCLIISLVLLFLYKTQPKVLQLIFSYGEEEDLSNKSENEEEHSSVLSLNEIL.

Residues 1–21 are Extracellular-facing; it reads MQANIFPFYPQPRTPFKFDTK. A helical transmembrane segment spans residues 22–42; that stretch reads IIEIIIICIVTACTFIIILPG. Over 43–49 the chain is Cytoplasmic; sequence IRGKSRS. Residues 50–70 form a helical membrane-spanning segment; sequence IWLLRILTSLFIGAVILAVNF. The Extracellular segment spans residues 71–91; that stretch reads TSDWEMGTITATTVYKSFSHS. A helical membrane pass occupies residues 92 to 112; that stretch reads MLNASIGLWIGLKGLNITLIG. The Cytoplasmic segment spans residues 113–175; that stretch reads NPEYQLNETI…GLFQQYCIST (63 aa). A helical transmembrane segment spans residues 176-198; that stretch reads YYSSGIMWIAFCSWILYNVLFSM. Residue P199 is a topological domain, extracellular. Residues 200-220 traverse the membrane as a helical segment; it reads VILYGIYMMFVTAICMLVSLI. Residues 221–247 lie on the Cytoplasmic side of the membrane; it reads SFASVRKAPVCNIQFGNSILKTHFGVS. A helical transmembrane segment spans residues 248 to 268; the sequence is YWLSLITGLLCLIISLVLLFL. At 269-308 the chain is on the extracellular side; it reads YKTQPKVLQLIFSYGEEEDLSNKSENEEEHSSVLSLNEIL. An N-linked (GlcNAc...) asparagine glycan is attached at N290.

It belongs to the DUOXA family.

Its subcellular location is the membrane. Functionally, possible role in maturation and transport from the endoplasmic reticulum to the plasma membrane of functional dual oxidase. This Xenopus laevis (African clawed frog) protein is Dual oxidase maturation factor 1 (duoxa1).